The chain runs to 198 residues: uncharacterized protein (198 aa).

Positions 11–71 (EGTHKAILSA…DSFLSTATDR (61 aa)) constitute an HTH tetR-type domain. Residues 34–53 (TVDKIAERAKVSKATIYKWW) constitute a DNA-binding region (H-T-H motif).

This is an uncharacterized protein from Bacillus subtilis (strain 168).